A 184-amino-acid chain; its full sequence is Inorganic pyrophosphatase (184 aa).

Positions 19, 33, and 45 each coordinate substrate. Asp55, Asp60, and Asp92 together coordinate Mg(2+). Tyr129 serves as a coordination point for substrate.

This sequence belongs to the PPase family. Homohexamer. Mg(2+) serves as cofactor.

The protein resides in the cytoplasm. It carries out the reaction diphosphate + H2O = 2 phosphate + H(+). Catalyzes the hydrolysis of inorganic pyrophosphate (PPi) forming two phosphate ions. The chain is Inorganic pyrophosphatase from Mycoplasma pneumoniae (strain ATCC 29342 / M129 / Subtype 1) (Mycoplasmoides pneumoniae).